The following is a 344-amino-acid chain: Phenylalanine--tRNA ligase alpha subunit (344 aa).

A Mg(2+)-binding site is contributed by glutamate 255.

Belongs to the class-II aminoacyl-tRNA synthetase family. Phe-tRNA synthetase alpha subunit type 1 subfamily. In terms of assembly, tetramer of two alpha and two beta subunits. Requires Mg(2+) as cofactor.

The protein resides in the cytoplasm. The catalysed reaction is tRNA(Phe) + L-phenylalanine + ATP = L-phenylalanyl-tRNA(Phe) + AMP + diphosphate + H(+). The protein is Phenylalanine--tRNA ligase alpha subunit of Phocaeicola vulgatus (strain ATCC 8482 / DSM 1447 / JCM 5826 / CCUG 4940 / NBRC 14291 / NCTC 11154) (Bacteroides vulgatus).